Reading from the N-terminus, the 481-residue chain is ATP synthase subunit beta (481 aa).

167 to 174 (GGAGVGKT) lines the ATP pocket.

Belongs to the ATPase alpha/beta chains family. As to quaternary structure, F-type ATPases have 2 components, CF(1) - the catalytic core - and CF(0) - the membrane proton channel. CF(1) has five subunits: alpha(3), beta(3), gamma(1), delta(1), epsilon(1). CF(0) has three main subunits: a(1), b(2) and c(9-12). The alpha and beta chains form an alternating ring which encloses part of the gamma chain. CF(1) is attached to CF(0) by a central stalk formed by the gamma and epsilon chains, while a peripheral stalk is formed by the delta and b chains.

It localises to the cell membrane. The enzyme catalyses ATP + H2O + 4 H(+)(in) = ADP + phosphate + 5 H(+)(out). Functionally, produces ATP from ADP in the presence of a proton gradient across the membrane. The catalytic sites are hosted primarily by the beta subunits. This Corynebacterium diphtheriae (strain ATCC 700971 / NCTC 13129 / Biotype gravis) protein is ATP synthase subunit beta.